The sequence spans 435 residues: D-inositol 3-phosphate glycosyltransferase (435 aa).

H25 lines the 1D-myo-inositol 3-phosphate pocket. Residues 31 to 32 (QP) and G39 each bind UDP-N-acetyl-alpha-D-glucosamine. 1D-myo-inositol 3-phosphate is bound by residues 36-41 (DAGGMN), K94, Y127, T151, and R171. The UDP-N-acetyl-alpha-D-glucosamine site is built by R245 and K250. 3 residues coordinate Mg(2+): Y320, R321, and A323. UDP-N-acetyl-alpha-D-glucosamine-binding residues include E333 and E341. T347 lines the Mg(2+) pocket.

Belongs to the glycosyltransferase group 1 family. MshA subfamily. As to quaternary structure, homodimer.

It catalyses the reaction 1D-myo-inositol 3-phosphate + UDP-N-acetyl-alpha-D-glucosamine = 1D-myo-inositol 2-acetamido-2-deoxy-alpha-D-glucopyranoside 3-phosphate + UDP + H(+). Its function is as follows. Catalyzes the transfer of a N-acetyl-glucosamine moiety to 1D-myo-inositol 3-phosphate to produce 1D-myo-inositol 2-acetamido-2-deoxy-glucopyranoside 3-phosphate in the mycothiol biosynthesis pathway. This chain is D-inositol 3-phosphate glycosyltransferase, found in Streptosporangium roseum (strain ATCC 12428 / DSM 43021 / JCM 3005 / KCTC 9067 / NCIMB 10171 / NRRL 2505 / NI 9100).